A 176-amino-acid chain; its full sequence is Shikimate kinase (176 aa).

An ATP-binding site is contributed by Gly-12–Thr-17. Residue Ser-16 coordinates Mg(2+). Substrate is bound by residues Asp-34, Arg-58, and Gly-80. An ATP-binding site is contributed by Arg-117. Arg-136 contributes to the substrate binding site. Arg-153 is an ATP binding site.

This sequence belongs to the shikimate kinase family. In terms of assembly, monomer. Mg(2+) serves as cofactor.

It localises to the cytoplasm. The catalysed reaction is shikimate + ATP = 3-phosphoshikimate + ADP + H(+). The protein operates within metabolic intermediate biosynthesis; chorismate biosynthesis; chorismate from D-erythrose 4-phosphate and phosphoenolpyruvate: step 5/7. Functionally, catalyzes the specific phosphorylation of the 3-hydroxyl group of shikimic acid using ATP as a cosubstrate. This is Shikimate kinase from Mycobacterium bovis (strain ATCC BAA-935 / AF2122/97).